Reading from the N-terminus, the 270-residue chain is Protein ABHD14A (270 aa).

A helical; Signal-anchor for type II membrane protein transmembrane segment spans residues 9 to 29 (LVVLGLVLLATVLLYLLLPSM). N-linked (GlcNAc...) asparagine glycosylation occurs at N61. Active-site charge relay system residues include S170 and D221. N237 is a glycosylation site (N-linked (GlcNAc...) asparagine). Catalysis depends on H248, which acts as the Charge relay system.

Belongs to the AB hydrolase superfamily. ABHD14 family.

The protein resides in the cytoplasm. Its subcellular location is the membrane. Its function is as follows. Possible role in granule neuron development. This Danio rerio (Zebrafish) protein is Protein ABHD14A.